The primary structure comprises 364 residues: Aminomethyltransferase (364 aa).

The protein belongs to the GcvT family. As to quaternary structure, the glycine cleavage system is composed of four proteins: P, T, L and H.

It catalyses the reaction N(6)-[(R)-S(8)-aminomethyldihydrolipoyl]-L-lysyl-[protein] + (6S)-5,6,7,8-tetrahydrofolate = N(6)-[(R)-dihydrolipoyl]-L-lysyl-[protein] + (6R)-5,10-methylene-5,6,7,8-tetrahydrofolate + NH4(+). In terms of biological role, the glycine cleavage system catalyzes the degradation of glycine. The polypeptide is Aminomethyltransferase (Enterobacter sp. (strain 638)).